Consider the following 377-residue polypeptide: Chaperone protein DnaJ (377 aa).

The J domain occupies Cys-8–Gly-73. Residues Gly-135–Glu-213 form a CR-type zinc finger. Zn(2+) contacts are provided by Cys-148, Cys-151, Cys-165, Cys-168, Cys-187, Cys-190, Cys-201, and Cys-204. CXXCXGXG motif repeat units lie at residues Cys-148–Gly-155, Cys-165–Gly-172, Cys-187–Gly-194, and Cys-201–Gly-208.

The protein belongs to the DnaJ family. As to quaternary structure, homodimer. Requires Zn(2+) as cofactor.

The protein resides in the cytoplasm. In terms of biological role, participates actively in the response to hyperosmotic and heat shock by preventing the aggregation of stress-denatured proteins and by disaggregating proteins, also in an autonomous, DnaK-independent fashion. Unfolded proteins bind initially to DnaJ; upon interaction with the DnaJ-bound protein, DnaK hydrolyzes its bound ATP, resulting in the formation of a stable complex. GrpE releases ADP from DnaK; ATP binding to DnaK triggers the release of the substrate protein, thus completing the reaction cycle. Several rounds of ATP-dependent interactions between DnaJ, DnaK and GrpE are required for fully efficient folding. Also involved, together with DnaK and GrpE, in the DNA replication of plasmids through activation of initiation proteins. The polypeptide is Chaperone protein DnaJ (Bradyrhizobium diazoefficiens (strain JCM 10833 / BCRC 13528 / IAM 13628 / NBRC 14792 / USDA 110)).